Reading from the N-terminus, the 430-residue chain is Sulfide-quinone reductase (430 aa).

FAD-binding positions include 9-13 (GGGVG), 34-36 (SDR), 42-43 (TP), and Thr105. Cys156 serves as the catalytic Cysteine persulfide intermediate. 2 disulfides stabilise this stretch: Cys280/Cys422 and Cys419/Cys430. Val294 and Gly314 together coordinate FAD. A quinone is bound at residue Ile346. Cys347 (cysteine persulfide intermediate) is an active-site residue. Lys382 provides a ligand contact to FAD.

The protein belongs to the SQRD family. In terms of assembly, homotrimer. Requires FAD as cofactor.

Its subcellular location is the membrane. The enzyme catalyses n a quinone + n hydrogen sulfide + n H(+) = polysulfur(n-2) + n a quinol. Its function is as follows. Catalyzes the oxidation of hydrogen sulfide, with the help of a quinone. Consecutive reaction cycles lead to the accumulation of a polysulfide product on the active site Cys residues; these products are released when they exceed a critical length, typically as cyclooctasulfur. This chain is Sulfide-quinone reductase, found in Aquifex aeolicus (strain VF5).